Reading from the N-terminus, the 111-residue chain is Ig kappa chain V-III region PC 2880/PC 1229 (111 aa).

A framework-1 region spans residues 1 to 23 (DIVLTQSPASLAVSLGQRATISC). C23 and C92 are oxidised to a cystine. A complementarity-determining-1 region spans residues 24-38 (RASESVDNYGISFMN). The segment at 39–53 (WFQQKPGQPPKLLIY) is framework-2. Residues 54–60 (AASNQGS) form a complementarity-determining-2 region. The segment at 61–92 (GVPARFSGSGSGTDFSLNIHPMEEDDTAMYFC) is framework-3. The tract at residues 93-101 (QQSKEVPWT) is complementarity-determining-3. The interval 102–111 (FGGGTKLEIK) is framework-4.

This Mus musculus (Mouse) protein is Ig kappa chain V-III region PC 2880/PC 1229.